The chain runs to 299 residues: Pantothenate synthetase (299 aa).

41–48 contacts ATP; that stretch reads MGALHEGH. Catalysis depends on His48, which acts as the Proton donor. Gln72 contacts (R)-pantoate. Gln72 is a binding site for beta-alanine. 158–161 lines the ATP pocket; the sequence is GQKD. Residue Gln164 coordinates (R)-pantoate. Residues Val187 and 195-198 contribute to the ATP site; that span reads MSSR.

It belongs to the pantothenate synthetase family. In terms of assembly, homodimer.

It is found in the cytoplasm. The catalysed reaction is (R)-pantoate + beta-alanine + ATP = (R)-pantothenate + AMP + diphosphate + H(+). Its pathway is cofactor biosynthesis; (R)-pantothenate biosynthesis; (R)-pantothenate from (R)-pantoate and beta-alanine: step 1/1. In terms of biological role, catalyzes the condensation of pantoate with beta-alanine in an ATP-dependent reaction via a pantoyl-adenylate intermediate. This is Pantothenate synthetase from Acidobacterium capsulatum (strain ATCC 51196 / DSM 11244 / BCRC 80197 / JCM 7670 / NBRC 15755 / NCIMB 13165 / 161).